The sequence spans 227 residues: Cytochrome c oxidase subunit 2 (227 aa).

The Mitochondrial intermembrane portion of the chain corresponds to 1–14 (MAYPFQLGLQDATS). The chain crosses the membrane as a helical span at residues 15 to 45 (PIMEELLHFHDHTLMIVFLISSLVLYIISLM). The Mitochondrial matrix portion of the chain corresponds to 46-59 (LTTKLTHTSTMDAQ). Residues 60 to 87 (EVETVWTILPAIILVLIALPSLRILYMM) form a helical membrane-spanning segment. The Mitochondrial intermembrane portion of the chain corresponds to 88-227 (DEINNPSLTV…YFETWSALMV (140 aa)). Residues H161, C196, E198, C200, H204, and M207 each contribute to the Cu cation site. E198 serves as a coordination point for Mg(2+). At Y218 the chain carries Phosphotyrosine.

Belongs to the cytochrome c oxidase subunit 2 family. Component of the cytochrome c oxidase (complex IV, CIV), a multisubunit enzyme composed of 14 subunits. The complex is composed of a catalytic core of 3 subunits MT-CO1, MT-CO2 and MT-CO3, encoded in the mitochondrial DNA, and 11 supernumerary subunits COX4I, COX5A, COX5B, COX6A, COX6B, COX6C, COX7A, COX7B, COX7C, COX8 and NDUFA4, which are encoded in the nuclear genome. The complex exists as a monomer or a dimer and forms supercomplexes (SCs) in the inner mitochondrial membrane with NADH-ubiquinone oxidoreductase (complex I, CI) and ubiquinol-cytochrome c oxidoreductase (cytochrome b-c1 complex, complex III, CIII), resulting in different assemblies (supercomplex SCI(1)III(2)IV(1) and megacomplex MCI(2)III(2)IV(2)). Found in a complex with TMEM177, COA6, COX18, COX20, SCO1 and SCO2. Interacts with TMEM177 in a COX20-dependent manner. Interacts with COX20. Interacts with COX16. Cu cation serves as cofactor.

It is found in the mitochondrion inner membrane. It carries out the reaction 4 Fe(II)-[cytochrome c] + O2 + 8 H(+)(in) = 4 Fe(III)-[cytochrome c] + 2 H2O + 4 H(+)(out). Its function is as follows. Component of the cytochrome c oxidase, the last enzyme in the mitochondrial electron transport chain which drives oxidative phosphorylation. The respiratory chain contains 3 multisubunit complexes succinate dehydrogenase (complex II, CII), ubiquinol-cytochrome c oxidoreductase (cytochrome b-c1 complex, complex III, CIII) and cytochrome c oxidase (complex IV, CIV), that cooperate to transfer electrons derived from NADH and succinate to molecular oxygen, creating an electrochemical gradient over the inner membrane that drives transmembrane transport and the ATP synthase. Cytochrome c oxidase is the component of the respiratory chain that catalyzes the reduction of oxygen to water. Electrons originating from reduced cytochrome c in the intermembrane space (IMS) are transferred via the dinuclear copper A center (CU(A)) of subunit 2 and heme A of subunit 1 to the active site in subunit 1, a binuclear center (BNC) formed by heme A3 and copper B (CU(B)). The BNC reduces molecular oxygen to 2 water molecules using 4 electrons from cytochrome c in the IMS and 4 protons from the mitochondrial matrix. The polypeptide is Cytochrome c oxidase subunit 2 (MT-CO2) (Cerdocyon thous (Crab-eating fox)).